The sequence spans 303 residues: Lipoyl synthase (303 aa).

Cysteine 35, cysteine 40, cysteine 46, cysteine 61, cysteine 65, cysteine 68, and serine 273 together coordinate [4Fe-4S] cluster. The 216-residue stretch at 47–262 (FRERQATFLI…KELAEKMGFR (216 aa)) folds into the Radical SAM core domain.

This sequence belongs to the radical SAM superfamily. Lipoyl synthase family. [4Fe-4S] cluster serves as cofactor.

The protein resides in the cytoplasm. It catalyses the reaction [[Fe-S] cluster scaffold protein carrying a second [4Fe-4S](2+) cluster] + N(6)-octanoyl-L-lysyl-[protein] + 2 oxidized [2Fe-2S]-[ferredoxin] + 2 S-adenosyl-L-methionine + 4 H(+) = [[Fe-S] cluster scaffold protein] + N(6)-[(R)-dihydrolipoyl]-L-lysyl-[protein] + 4 Fe(3+) + 2 hydrogen sulfide + 2 5'-deoxyadenosine + 2 L-methionine + 2 reduced [2Fe-2S]-[ferredoxin]. It functions in the pathway protein modification; protein lipoylation via endogenous pathway; protein N(6)-(lipoyl)lysine from octanoyl-[acyl-carrier-protein]: step 2/2. Its function is as follows. Catalyzes the radical-mediated insertion of two sulfur atoms into the C-6 and C-8 positions of the octanoyl moiety bound to the lipoyl domains of lipoate-dependent enzymes, thereby converting the octanoylated domains into lipoylated derivatives. The sequence is that of Lipoyl synthase from Geobacter sulfurreducens (strain ATCC 51573 / DSM 12127 / PCA).